The sequence spans 186 residues: Ribosome-recycling factor (186 aa).

Belongs to the RRF family.

The protein localises to the cytoplasm. In terms of biological role, responsible for the release of ribosomes from messenger RNA at the termination of protein biosynthesis. May increase the efficiency of translation by recycling ribosomes from one round of translation to another. This is Ribosome-recycling factor from Burkholderia mallei (strain NCTC 10247).